We begin with the raw amino-acid sequence, 527 residues long: GMP synthase [glutamine-hydrolyzing] (527 aa).

The region spanning 19–212 (KIIVLDYGSQ…AFSICGAKGD (194 aa)) is the Glutamine amidotransferase type-1 domain. Cysteine 96 acts as the Nucleophile in catalysis. Catalysis depends on residues histidine 186 and glutamate 188. One can recognise a GMPS ATP-PPase domain in the interval 213–402 (WSMANFVDMQ…LGMPDEVVWR (190 aa)). 240–246 (SGGVDSS) is an ATP binding site.

As to quaternary structure, homodimer.

The catalysed reaction is XMP + L-glutamine + ATP + H2O = GMP + L-glutamate + AMP + diphosphate + 2 H(+). Its pathway is purine metabolism; GMP biosynthesis; GMP from XMP (L-Gln route): step 1/1. Its function is as follows. Catalyzes the synthesis of GMP from XMP. The chain is GMP synthase [glutamine-hydrolyzing] from Streptococcus thermophilus (strain CNRZ 1066).